Reading from the N-terminus, the 185-residue chain is Elongation factor P (185 aa).

Belongs to the elongation factor P family.

The protein resides in the cytoplasm. Its pathway is protein biosynthesis; polypeptide chain elongation. Functionally, involved in peptide bond synthesis. Stimulates efficient translation and peptide-bond synthesis on native or reconstituted 70S ribosomes in vitro. Probably functions indirectly by altering the affinity of the ribosome for aminoacyl-tRNA, thus increasing their reactivity as acceptors for peptidyl transferase. In Deinococcus geothermalis (strain DSM 11300 / CIP 105573 / AG-3a), this protein is Elongation factor P.